A 361-amino-acid polypeptide reads, in one-letter code: uncharacterized protein (361 aa).

This is an uncharacterized protein from Methanothermobacter thermautotrophicus (Methanobacterium thermoformicicum).